The sequence spans 127 residues: UPF0166 protein PYRAB06660 (127 aa).

Belongs to the UPF0166 family.

This is UPF0166 protein PYRAB06660 from Pyrococcus abyssi (strain GE5 / Orsay).